A 618-amino-acid polypeptide reads, in one-letter code: MKQSKMLIPTLREMPSDAQVISHALMVRAGYVRQVSAGIYAYLPLAHRTIEKFKTIMRQEFDKIGAVEMLAPALLTADLWRESGRYETYGEDLYKLKNRDKSDFILGPTHEETFTTLVRDAVKSYKQLPLNLYQIQSKYRDEKRPRNGLLRTREFIMKDGYSFHQSYDDLDVTYDAYRQAYEAIFTRAGLDFKGIIGDGGAMGGKDSQEFMAITPDRTNLDRWLVLDKSIPSLADIPEEVLEEIKAELASWLVSGEDTIAYSSESSYAANLEMATSEYKPSSKVTALDDLVEIETPNCKTIDEVAAFLDITEHQVIKTLLFMADHEPVLALLVGNDQINAVKLKNHLGADFLEPASEEEAHTILGAGFGSLGPVHLTDGIRIVADRKIQDLANAVAGANKDGYHLTGVNPNRDFQAEYADIREVKEGETSPDGHGVLQFARGIEIGHIFKLGTRYSDSMAANILDENGRAVPIVMGCYGIGVSRILSAVIEQHARLFVSKTPKGDYRYAWGINFPKELAPFDVHLITVNVKDQEAQDLTEKVEASLMAKGYDVLTDDRNERVGSKFSDSDLIGLPIRVTIGKKAAEGIVEIKIKATGDSIEVHADSLIETLDILTKDN.

The protein belongs to the class-II aminoacyl-tRNA synthetase family. ProS type 1 subfamily. As to quaternary structure, homodimer.

It localises to the cytoplasm. The catalysed reaction is tRNA(Pro) + L-proline + ATP = L-prolyl-tRNA(Pro) + AMP + diphosphate. Its function is as follows. Catalyzes the attachment of proline to tRNA(Pro) in a two-step reaction: proline is first activated by ATP to form Pro-AMP and then transferred to the acceptor end of tRNA(Pro). As ProRS can inadvertently accommodate and process non-cognate amino acids such as alanine and cysteine, to avoid such errors it has two additional distinct editing activities against alanine. One activity is designated as 'pretransfer' editing and involves the tRNA(Pro)-independent hydrolysis of activated Ala-AMP. The other activity is designated 'posttransfer' editing and involves deacylation of mischarged Ala-tRNA(Pro). The misacylated Cys-tRNA(Pro) is not edited by ProRS. The chain is Proline--tRNA ligase from Streptococcus equi subsp. zooepidemicus (strain H70).